We begin with the raw amino-acid sequence, 128 residues long: UPF0325 protein YaeH (128 aa).

Belongs to the UPF0325 family.

The polypeptide is UPF0325 protein YaeH (Salmonella agona (strain SL483)).